A 158-amino-acid polypeptide reads, in one-letter code: Ribonucleases P/MRP protein subunit POP6 (158 aa).

Residues 51–71 are a coiled coil; the sequence is KNDNIKKSVNKLDKQINMADR.

In terms of assembly, component of nuclear RNase P and RNase MRP complexes. RNase P consists of an RNA moiety and at least 9 protein subunits including POP1, POP3, POP4, POP5, POP6, POP7, POP8, RPP1 and RPR2. RNase MRP complex consists of an RNA moiety and at least 10 protein subunits including POP1, POP3, POP4, POP5, POP6, POP7, POP8, RMP1, RPP1 and SNM1, many of which are shared with the RNase P complex.

The protein localises to the nucleus. It catalyses the reaction Endonucleolytic cleavage of RNA, removing 5'-extranucleotides from tRNA precursor.. Functionally, component of ribonuclease P, a protein complex that generates mature tRNA molecules by cleaving their 5'-ends. Also a component of RNase MRP, which cleaves pre-rRNA sequences. This chain is Ribonucleases P/MRP protein subunit POP6 (POP6), found in Saccharomyces cerevisiae (strain ATCC 204508 / S288c) (Baker's yeast).